Here is an 875-residue protein sequence, read N- to C-terminus: Kelch-like protein 29 (875 aa).

Polar residues predominate over residues Ile-113–Trp-126. 2 disordered regions span residues Ile-113 to Gly-145 and Gly-240 to His-291. A compositionally biased stretch (basic and acidic residues) spans Pro-131 to Asp-140. A compositionally biased stretch (low complexity) spans Pro-270–Ala-280. The BTB domain maps to Thr-329–Ser-401. 6 Kelch repeats span residues Val-585 to Gly-635, Asn-637 to Gly-683, Lys-684 to Gly-730, Ile-732 to Gly-778, Phe-779 to Gly-821, and Lys-822 to Lys-870.

The polypeptide is Kelch-like protein 29 (Klhl29) (Mus musculus (Mouse)).